A 91-amino-acid polypeptide reads, in one-letter code: MSVLRLFTGRAASAPVARERLQILLAHERSLRGQPDLLMQLREEILAVVSRHVLLDPDKVIVRMDRGKHVSTLEVDIELPNGADRAFASAG.

This sequence belongs to the MinE family.

Its function is as follows. Prevents the cell division inhibition by proteins MinC and MinD at internal division sites while permitting inhibition at polar sites. This ensures cell division at the proper site by restricting the formation of a division septum at the midpoint of the long axis of the cell. The protein is Cell division topological specificity factor of Bradyrhizobium sp. (strain BTAi1 / ATCC BAA-1182).